A 330-amino-acid chain; its full sequence is Phenylalanine--tRNA ligase alpha subunit (330 aa).

E246 provides a ligand contact to Mg(2+).

This sequence belongs to the class-II aminoacyl-tRNA synthetase family. Phe-tRNA synthetase alpha subunit type 1 subfamily. Tetramer of two alpha and two beta subunits. Mg(2+) serves as cofactor.

It is found in the cytoplasm. The enzyme catalyses tRNA(Phe) + L-phenylalanine + ATP = L-phenylalanyl-tRNA(Phe) + AMP + diphosphate + H(+). This is Phenylalanine--tRNA ligase alpha subunit from Campylobacter jejuni subsp. doylei (strain ATCC BAA-1458 / RM4099 / 269.97).